A 377-amino-acid polypeptide reads, in one-letter code: Chaperone protein DnaJ (377 aa).

The J domain occupies 5–70 (DFYETLGVSK…QKRAAYDRFG (66 aa)). A CR-type zinc finger spans residues 138–216 (GKTAQIRVPT…CHGQGRVTEE (79 aa)). Zn(2+) is bound by residues cysteine 151, cysteine 154, cysteine 168, cysteine 171, cysteine 190, cysteine 193, cysteine 204, and cysteine 207. CXXCXGXG motif repeat units follow at residues 151–158 (CDVCSGSG), 168–175 (CATCQGSG), 190–197 (CPTCHGRG), and 204–211 (CGKCHGQG).

The protein belongs to the DnaJ family. As to quaternary structure, homodimer. Requires Zn(2+) as cofactor.

It is found in the cytoplasm. Functionally, participates actively in the response to hyperosmotic and heat shock by preventing the aggregation of stress-denatured proteins and by disaggregating proteins, also in an autonomous, DnaK-independent fashion. Unfolded proteins bind initially to DnaJ; upon interaction with the DnaJ-bound protein, DnaK hydrolyzes its bound ATP, resulting in the formation of a stable complex. GrpE releases ADP from DnaK; ATP binding to DnaK triggers the release of the substrate protein, thus completing the reaction cycle. Several rounds of ATP-dependent interactions between DnaJ, DnaK and GrpE are required for fully efficient folding. Also involved, together with DnaK and GrpE, in the DNA replication of plasmids through activation of initiation proteins. The polypeptide is Chaperone protein DnaJ (Agrobacterium fabrum (strain C58 / ATCC 33970) (Agrobacterium tumefaciens (strain C58))).